The chain runs to 862 residues: Leucine--tRNA ligase (862 aa).

Positions 49–59 (PYPSGRIHMGH) match the 'HIGH' region motif. The 'KMSKS' region signature appears at 625 to 629 (KMSKS). Lysine 628 provides a ligand contact to ATP.

It belongs to the class-I aminoacyl-tRNA synthetase family.

The protein resides in the cytoplasm. It carries out the reaction tRNA(Leu) + L-leucine + ATP = L-leucyl-tRNA(Leu) + AMP + diphosphate. This Paramagnetospirillum magneticum (strain ATCC 700264 / AMB-1) (Magnetospirillum magneticum) protein is Leucine--tRNA ligase.